A 680-amino-acid polypeptide reads, in one-letter code: Galactose oxidase (680 aa).

The signal sequence occupies residues 1–24 (MKHLLTLALCFSSINAVAVTVPHK). Residues 25–41 (AVGTGIPEGSLQFLSLR) constitute a propeptide that is removed on maturation. The F5/8 type C domain occupies 42–189 (ASAPIGSAIS…SIAEINVFQA (148 aa)). A disulfide bridge links cysteine 59 with cysteine 68. Kelch repeat units lie at residues 223–268 (RVLM…HDMF), 279–321 (QIVV…TMSD), 323–372 (RVFT…LYRS), 436–490 (KILT…VLPD), and 492–544 (STFI…LLLP). The segment at residues 269-313 (CPGISMDGNGQIVVTGGNDAKKTSLYDSSSDSWIPGPDMQVARGY) is a cross-link (3'-(S-cysteinyl)-tyrosine (Cys-Tyr)). Cu cation is bound at residue tyrosine 313. Residues tyrosine 536 and histidine 537 each contribute to the Cu cation site. Tyrosine 536 functions as the Proton acceptor in the catalytic mechanism. Cysteine 556 and cysteine 559 form a disulfide bridge. Histidine 622 is a binding site for Cu cation.

As to quaternary structure, monomer. The cofactor is Cu(2+). Galactose oxidase contains a protein-derived free radical cofactor. In the active state, Tyr-313, which is cross-linked to Cys-269 via a thioether bond, is oxidized to a radical and acts with Cu(2+) as a two-electron acceptor in the oxidation reaction. The cross-link is believed to modulate the redox potential of the tyrosyl radical, which is further stabilized by a stacking interaction with Trp-331 in the active site. The post-translational formation of the cross-link is closely linked to the propeptide cleavage event, and both are copper-dependent, autocatalytic processes. The propeptide may act as an intramolecular chaperone, facilitating thioester bond formation and copper binding by positioning of active-site residues, including copper ligands.

It is found in the secreted. The enzyme catalyses D-galactose + O2 = D-galacto-hexodialdose + H2O2. Its activity is regulated as follows. Inhibited by diethyldithiocarbamate. Catalyzes the sterospecific oxidation of primary alcohols to the corresponding aldehydes. The biologically relevant substrate of the enzyme is not known as the enzyme exhibits broad substrate specificity from small alcohols through sugars to oligo- and polysaccharides. This chain is Galactose oxidase (GAOA), found in Gibberella zeae (Wheat head blight fungus).